The sequence spans 386 residues: Glucose-1-phosphate adenylyltransferase (386 aa).

Alpha-D-glucose 1-phosphate contacts are provided by residues Y100, G165, 180-181, and S191; that span reads EK.

It belongs to the bacterial/plant glucose-1-phosphate adenylyltransferase family. In terms of assembly, homotetramer.

It catalyses the reaction alpha-D-glucose 1-phosphate + ATP + H(+) = ADP-alpha-D-glucose + diphosphate. It participates in glycan biosynthesis; glycogen biosynthesis. In terms of biological role, involved in the biosynthesis of ADP-glucose, a building block required for the elongation reactions to produce glycogen. Catalyzes the reaction between ATP and alpha-D-glucose 1-phosphate (G1P) to produce pyrophosphate and ADP-Glc. The polypeptide is Glucose-1-phosphate adenylyltransferase (Clostridium botulinum (strain Alaska E43 / Type E3)).